We begin with the raw amino-acid sequence, 565 residues long: MDSSPVTYSGEPPYKLRRLSPSYPYVSKLRERCASKIETLSEGSARDSLEEEDVSEAMATGAFLATRLYLPSVLPQRITTLTFLDHFKKSRPLPNSDKRLNPIFYRLAYIRDLVGEMELEGIVERGTASRLLGASSPAGFVAGTYTHARDLSKTMSLASVRDAVLAIEAQTRDQSESQLWALLRRGLATASTMKWGALGPQYHPQWCEVSTNAKGIPNNPALQFGQTNERTARSLISALYVARSEAATPDLLVDPGCGQCFVFDESASVPGDAYACGLLMDARTGVVGASLDMLVCDRDPSGVLSPHSTQTTLDFFEIKCRAKYLFDPDLFSPVATAYANLLKHRTAVCLRKFLRSIKNPAVEYFAPTSVPGATEALITCNSSWKPREVNETNRRCGDFDRDHIALNLDASSDVWLFSEPDLESETITPARWDTGELALSVPVFANPRHPNFKQILVQAYVLSGHFPDHQLRPFLVTFIGRHRKRCEEGKTFTICDRPEGSPYNLNEVVHSSCAIPILLFVTPVIVDREGCWEDIEIESLTAFNKTADAIWDSDSPADVSEPTSS.

The protein belongs to the herpesviridae alkaline nuclease family. In terms of assembly, interacts with major DNA-binding protein; this interaction increases the nuclease processivity of the alkaline exonuclease.

The protein resides in the host nucleus. It localises to the host cytoplasm. Its function is as follows. Plays a role in processing non linear or branched viral DNA intermediates in order to promote the production of mature packaged unit-length linear progeny viral DNA molecules. Exhibits endonuclease and exonuclease activities and accepts both double-stranded and single-stranded DNA as substrate. Exonuclease digestion of DNA is in the 5'-&gt; 3' direction and the products are 5'-monophosphate nucleosides. Additionally, forms a recombinase with the major DNA-binding protein, which displays strand exchange activity. The sequence is that of Alkaline nuclease from Equus caballus (Horse).